A 309-amino-acid polypeptide reads, in one-letter code: HPr kinase/phosphorylase (309 aa).

Catalysis depends on residues His-138 and Lys-159. 153–160 lines the ATP pocket; sequence GQSGVGKS. Mg(2+) is bound at residue Ser-160. Asp-177 acts as the Proton acceptor; for phosphorylation activity. Proton donor; for dephosphorylation activity in catalysis. The tract at residues 201–210 is important for the catalytic mechanism of both phosphorylation and dephosphorylation; it reads LEIRGLGIIN. Glu-202 provides a ligand contact to Mg(2+). Arg-243 is an active-site residue. Residues 264–269 are important for the catalytic mechanism of dephosphorylation; it reads PVRPGR.

The protein belongs to the HPrK/P family. As to quaternary structure, homohexamer. The cofactor is Mg(2+).

The catalysed reaction is [HPr protein]-L-serine + ATP = [HPr protein]-O-phospho-L-serine + ADP + H(+). The enzyme catalyses [HPr protein]-O-phospho-L-serine + phosphate + H(+) = [HPr protein]-L-serine + diphosphate. Functionally, catalyzes the ATP- as well as the pyrophosphate-dependent phosphorylation of a specific serine residue in HPr, a phosphocarrier protein of the phosphoenolpyruvate-dependent sugar phosphotransferase system (PTS). HprK/P also catalyzes the pyrophosphate-producing, inorganic phosphate-dependent dephosphorylation (phosphorolysis) of seryl-phosphorylated HPr (P-Ser-HPr). The two antagonistic activities of HprK/P are regulated by several intracellular metabolites, which change their concentration in response to the absence or presence of rapidly metabolisable carbon sources (glucose, fructose, etc.) in the growth medium. Also phosphorylates/dephosphorylates the HPr-like catabolite repression protein crh on a specific serine residue. Therefore, by controlling the phosphorylation state of HPr and crh, HPrK/P is a sensor enzyme that plays a major role in the regulation of carbon metabolism and sugar transport: it mediates carbon catabolite repression (CCR), and regulates PTS-catalyzed carbohydrate uptake and inducer exclusion. This Bacillus cereus (strain B4264) protein is HPr kinase/phosphorylase.